The primary structure comprises 244 residues: uncharacterized protein (244 aa).

Basic residues predominate over residues 1–11; the sequence is MSRRSRSRSRS. 2 disordered regions span residues 1 to 104 and 213 to 244; these read MSRR…TLNE and ARQKSDMKKNEQQAILNKSGNSRAPIKFKFGK. Basic and acidic residues predominate over residues 12–31; the sequence is PKRDREERKRREDRDRDRER. The segment covering 32 to 46 has biased composition (basic residues); it reads KRDRKDRERKRRHRS. Positions 63–75 are enriched in basic and acidic residues; that stretch reads FREERRRRERNES. Over residues 77–89 the composition is skewed to pro residues; sequence KLPPPPPPPPSDP. A compositionally biased stretch (basic and acidic residues) spans 213–223; sequence ARQKSDMKKNE. Residues 224–234 are compositionally biased toward polar residues; that stretch reads QQAILNKSGNS.

This is an uncharacterized protein from Caenorhabditis elegans.